The sequence spans 340 residues: UDP-3-O-(3-hydroxymyristoyl)glucosamine N-acyltransferase (340 aa).

H239 functions as the Proton acceptor in the catalytic mechanism.

This sequence belongs to the transferase hexapeptide repeat family. LpxD subfamily. As to quaternary structure, homotrimer.

It catalyses the reaction a UDP-3-O-[(3R)-3-hydroxyacyl]-alpha-D-glucosamine + a (3R)-hydroxyacyl-[ACP] = a UDP-2-N,3-O-bis[(3R)-3-hydroxyacyl]-alpha-D-glucosamine + holo-[ACP] + H(+). The enzyme catalyses UDP-3-O-[(3R)-3-hydroxytetradecanoyl]-alpha-D-glucosamine + (3R)-hydroxytetradecanoyl-[ACP] = UDP-2-N,3-O-bis[(3R)-3-hydroxytetradecanoyl]-alpha-D-glucosamine + holo-[ACP] + H(+). The protein operates within glycolipid biosynthesis; lipid IV(A) biosynthesis; lipid IV(A) from (3R)-3-hydroxytetradecanoyl-[acyl-carrier-protein] and UDP-N-acetyl-alpha-D-glucosamine: step 3/6. In terms of biological role, catalyzes the N-acylation of UDP-3-O-(hydroxytetradecanoyl)glucosamine using 3-hydroxytetradecanoyl-ACP as the acyl donor. Is involved in the biosynthesis of lipid A, a phosphorylated glycolipid that anchors the lipopolysaccharide to the outer membrane of the cell. In Wigglesworthia glossinidia brevipalpis, this protein is UDP-3-O-(3-hydroxymyristoyl)glucosamine N-acyltransferase.